A 299-amino-acid polypeptide reads, in one-letter code: MDIPDFSSISSRPTIFEFEGISMINHFTENWEKVKNFQARPDDILIATYPKAGTTWVSYILDLLYFGENAPEEHTSQPIYMRVPFLESCFKVIASGTELADNMTTSPRLIKTHLPVQLIPKSFWEQNSRVVYVARNAKDNVVSYFHFDRMNIVEPDPGDWNTFLHRFMDGKSVFGPWYDHVNGYWEKKQTYSNLLYLFYEDLVEDTGREVDRLCSFLGLSTSVSDREKITKDVQFDAMKQNKMTNYSTLPVMDFKISPFMRKGKVGDWKNHFTVAQNEQFDEVYKEKMKNATVKFRTEI.

51 to 56 (KAGTTW) is a 3'-phosphoadenylyl sulfate binding site. The active-site Proton acceptor is histidine 113. 3'-phosphoadenylyl sulfate-binding positions include arginine 135, serine 143, tyrosine 199, 233 to 238 (VQFDAM), and 261 to 263 (RKG).

Belongs to the sulfotransferase 1 family. As to expression, expressed in liver.

The protein localises to the cytoplasm. With respect to regulation, inhibited by Co(2+), Zn(2+), Cd(2+) and Pb(2+) ions. Inactivated by Hg(2+) and Cu(2+) ions. In terms of biological role, sulfotransferase that utilizes 3'-phospho-5'-adenylyl sulfate (PAPS) as sulfonate donor to catalyze the sulfate conjugation of a variety of xenobiotic and endogenous compounds, including 2-naphthol, hydroxychlorobiphenyls, dopamine and T3 (triiodo-L-thyronine). This is Cytosolic sulfotransferase 1 from Danio rerio (Zebrafish).